The following is a 147-amino-acid chain: Probable disulfide formation protein (147 aa).

Residues Asn9 to Tyr28 traverse the membrane as a helical segment. An intrachain disulfide couples Cys38 to Cys41. A run of 2 helical transmembrane segments spans residues Tyr43–Thr62 and Tyr69–Leu86. Cys99 and Cys106 are oxidised to a cystine. A helical transmembrane segment spans residues Gly115–Phe138.

This sequence belongs to the DsbB family. BdbC subfamily.

It localises to the cell inner membrane. Required for disulfide bond formation in some proteins. The sequence is that of Probable disulfide formation protein from Coxiella burnetii (strain CbuK_Q154) (Coxiella burnetii (strain Q154)).